The chain runs to 319 residues: Transaldolase (319 aa).

Lys131 (schiff-base intermediate with substrate) is an active-site residue.

It belongs to the transaldolase family. Type 1 subfamily. In terms of assembly, homodimer.

Its subcellular location is the cytoplasm. It catalyses the reaction D-sedoheptulose 7-phosphate + D-glyceraldehyde 3-phosphate = D-erythrose 4-phosphate + beta-D-fructose 6-phosphate. It functions in the pathway carbohydrate degradation; pentose phosphate pathway; D-glyceraldehyde 3-phosphate and beta-D-fructose 6-phosphate from D-ribose 5-phosphate and D-xylulose 5-phosphate (non-oxidative stage): step 2/3. Transaldolase is important for the balance of metabolites in the pentose-phosphate pathway. The protein is Transaldolase of Wigglesworthia glossinidia brevipalpis.